We begin with the raw amino-acid sequence, 366 residues long: NADP-dependent oxidoreductase domain-containing protein 1 (366 aa).

The protein belongs to the pyrroline-5-carboxylate reductase family.

In terms of biological role, probable oxidoreductase. The protein is NADP-dependent oxidoreductase domain-containing protein 1 (Noxred1) of Mus musculus (Mouse).